The following is a 287-amino-acid chain: Diaminopimelate epimerase (287 aa).

Substrate-binding residues include Asn-11, Gln-44, and Asn-64. Catalysis depends on Cys-73, which acts as the Proton donor. Substrate contacts are provided by residues 74-75 (GN), Asn-157, Asn-190, and 208-209 (ER). The active-site Proton acceptor is the Cys-217. 218–219 (GT) lines the substrate pocket.

Belongs to the diaminopimelate epimerase family. Homodimer.

The protein resides in the cytoplasm. It carries out the reaction (2S,6S)-2,6-diaminopimelate = meso-2,6-diaminopimelate. It participates in amino-acid biosynthesis; L-lysine biosynthesis via DAP pathway; DL-2,6-diaminopimelate from LL-2,6-diaminopimelate: step 1/1. Functionally, catalyzes the stereoinversion of LL-2,6-diaminopimelate (L,L-DAP) to meso-diaminopimelate (meso-DAP), a precursor of L-lysine and an essential component of the bacterial peptidoglycan. This is Diaminopimelate epimerase from Halorhodospira halophila (strain DSM 244 / SL1) (Ectothiorhodospira halophila (strain DSM 244 / SL1)).